The sequence spans 346 residues: Selenide, water dikinase (346 aa).

Residue cysteine 15 is part of the active site. ATP contacts are provided by residues lysine 18 and 46–48; that span reads SKD. Residue aspartate 49 participates in Mg(2+) binding. ATP contacts are provided by residues aspartate 66, aspartate 89, and 137-139; that span reads GHS. Mg(2+) is bound at residue aspartate 89. Aspartate 225 contributes to the Mg(2+) binding site.

Belongs to the selenophosphate synthase 1 family. Class I subfamily. As to quaternary structure, homodimer. It depends on Mg(2+) as a cofactor.

It carries out the reaction hydrogenselenide + ATP + H2O = selenophosphate + AMP + phosphate + 2 H(+). In terms of biological role, synthesizes selenophosphate from selenide and ATP. The polypeptide is Selenide, water dikinase (Photobacterium profundum (strain SS9)).